The primary structure comprises 471 residues: N(6)-adenine-specific methyltransferase METTL4 (471 aa).

The protein belongs to the MT-A70-like family.

The protein resides in the nucleus. The enzyme catalyses a 2'-O-methyladenosine in U2 snRNA + S-adenosyl-L-methionine = an N(6)-methyl-2'-O-methyladenosine in U2 snRNA + S-adenosyl-L-homocysteine + H(+). It catalyses the reaction a 2'-deoxyadenosine in DNA + S-adenosyl-L-methionine = an N(6)-methyl-2'-deoxyadenosine in DNA + S-adenosyl-L-homocysteine + H(+). Its function is as follows. N(6)-adenine-specific methyltransferase that can methylate both RNAs and DNA. Acts as a N(6)-adenine-specific RNA methyltransferase by catalyzing formation of N6,2'-O-dimethyladenosine (m6A(m)) on internal positions of U2 small nuclear RNA (snRNA): methylates the 6th position of adenine residues with a pre-deposited 2'-O-methylation. Internal m6A(m) methylation of snRNAs regulates RNA splicing. Also able to act as a N(6)-adenine-specific DNA methyltransferase by mediating methylation of DNA on the 6th position of adenine (N(6)-methyladenosine). The existence of N(6)-methyladenosine (m6A) on DNA is however unclear in mammals, and additional evidences are required to confirm the role of the N(6)-adenine-specific DNA methyltransferase activity of METTL4 in vivo. Acts as a regulator of mitochondrial transcript levels and mitochondrial DNA (mtDNA) copy number by mediating mtDNA N(6)-methylation: m6A on mtDNA reduces transcription by repressing TFAM DNA-binding and bending. N(6)-methyladenosine deposition by METTL4 regulates Polycomb silencing by triggering ubiquitination and degradation of sensor proteins ASXL1 and MPND, leading to inactivation of the PR-DUB complex and subsequent preservation of Polycomb silencing. The chain is N(6)-adenine-specific methyltransferase METTL4 from Mus musculus (Mouse).